The primary structure comprises 571 residues: Ferroportin (571 aa).

The Cytoplasmic segment spans residues 1 to 23 (MTRAGDHNRQRGCCGSLADYLTS). The helical transmembrane segment at 24–53 (AKFLLYLGHSLSTWGDRMWHFAVSVFLVEL) threads the bilayer. The Fe cation site is built by D39 and H43. At 54–57 (YGNS) the chain is on the extracellular side. The helical transmembrane segment at 58-84 (LLLTAVYGLVVAGSVLVLGAIIGDWVD) threads the bilayer. The Cytoplasmic portion of the chain corresponds to 85–87 (KNA). Residues 88-118 (RLKVAQTSLVVQNVSVILCGIILMMVFLHKH) traverse the membrane as a helical segment. The Extracellular portion of the chain corresponds to 119-126 (ELLTMYHG). The chain crosses the membrane as a helical span at residues 127 to 162 (WVLTSCYILIITIANIANLASTATAITIQRDWIVVV). Topologically, residues 163-164 (AG) are cytoplasmic. The chain crosses the membrane as a helical span at residues 165–195 (EDRSKLANMNATIRRIDQLTNILAPMAVGQI). At 196–202 (MTFGSPV) the chain is on the extracellular side. The helical transmembrane segment at 203–229 (IGCGFISGWNLVSMCVEYVLLWKVYQK) threads the bilayer. The Cytoplasmic segment spans residues 230–306 (TPALAVKAGL…DGWVSYYNQP (77 aa)). A helical transmembrane segment spans residues 307–333 (VFLAGMGLAFLYMTVLGFDCITTGYAY). A Fe cation-binding site is contributed by C326. Over 334 to 338 (TQGLS) the chain is Extracellular. The chain crosses the membrane as a helical span at residues 339 to 366 (GSILSILMGASAITGIMGTVAFTWLRRK). Residues 367 to 368 (CG) are Cytoplasmic-facing. Residues 369–391 (LVRTGLISGLAQLSCLILCVISV) form a helical membrane-spanning segment. Topologically, residues 392 to 453 (FMPGSPLDLS…ETSPESVPII (62 aa)) are extracellular. Residue N434 is glycosylated (N-linked (GlcNAc...) asparagine). A helical membrane pass occupies residues 454–483 (SVSLLFAGVIAARIGLWSFDLTVTQLLQEN). The Cytoplasmic portion of the chain corresponds to 484-488 (VIESE). A helical transmembrane segment spans residues 489 to 513 (RGIINGVQNSMNYLLDLLHFIMVIL). Residue H507 coordinates Fe cation. Topologically, residues 514–516 (APN) are extracellular. The chain crosses the membrane as a helical span at residues 517-542 (PEAFGLLVLISVSFVAMGHIMYFRFA). Over 543-571 (QNTLGNKLFACGPDAKEVRKENQANTSVV) the chain is Cytoplasmic.

Belongs to the ferroportin (FP) (TC 2.A.100) family. SLC40A subfamily. In terms of assembly, identified in a complex with STOM. Interacts with HAMP; affinity of the peptide hormone HAMP for SLC40A1 increases by 80-fold in the presence of iron and the interaction promotes SLC40A1 ubiquitination and degradation. Part of a complex composed of SLC40A1/ferroportin, TF/transferrin and HEPH/hephaestin that transfers iron from cells to transferrin. Polyubiquitinated by RNF217; leading to proteasomal degradation. Under conditions of high systemic iron levels, both the hormone peptide hepcidin/HAMP and holo(iron bound)-transferrin/TF induce the ubiquitination, internalization and proteasomal degradation of SLC40A1 to control iron release from cells. In terms of tissue distribution, detected in erythrocytes (at protein level). Expressed in placenta, intestine, muscle and spleen. Highly expressed in mature red blood.

It localises to the cell membrane. The protein resides in the basolateral cell membrane. It catalyses the reaction Fe(2+)(in) = Fe(2+)(out). Transports Fe(2+) from the inside of a cell to the outside of the cell, playing a key role for maintaining systemic iron homeostasis. Transports iron from intestinal, splenic, hepatic cells, macrophages and erythrocytes into the blood to provide iron to other tissues. Controls therefore dietary iron uptake, iron recycling by macrophages and erythrocytes, and release of iron stores in hepatocytes. When iron is in excess in serum, circulating HAMP/hepcidin levels increase resulting in a degradation of SLC40A1, thus limiting the iron efflux to plasma. The chain is Ferroportin from Homo sapiens (Human).